The following is a 255-amino-acid chain: NAD kinase (255 aa).

Catalysis depends on Asp-44, which acts as the Proton acceptor. NAD(+)-binding positions include 44 to 45 (DG), His-49, 114 to 115 (NE), Asp-144, Ala-152, 155 to 160 (SAYNLS), and Gln-216.

The protein belongs to the NAD kinase family. A divalent metal cation is required as a cofactor.

The protein resides in the cytoplasm. The enzyme catalyses NAD(+) + ATP = ADP + NADP(+) + H(+). Involved in the regulation of the intracellular balance of NAD and NADP, and is a key enzyme in the biosynthesis of NADP. Catalyzes specifically the phosphorylation on 2'-hydroxyl of the adenosine moiety of NAD to yield NADP. The chain is NAD kinase from Rickettsia canadensis (strain McKiel).